The primary structure comprises 288 residues: 4-hydroxy-3-methylbut-2-enyl diphosphate reductase (288 aa).

A [4Fe-4S] cluster-binding site is contributed by Cys-12. Positions 42 and 77 each coordinate (2E)-4-hydroxy-3-methylbut-2-enyl diphosphate. Dimethylallyl diphosphate-binding residues include His-42 and His-77. Isopentenyl diphosphate is bound by residues His-42 and His-77. Cys-99 contacts [4Fe-4S] cluster. (2E)-4-hydroxy-3-methylbut-2-enyl diphosphate is bound at residue His-127. Residue His-127 coordinates dimethylallyl diphosphate. Isopentenyl diphosphate is bound at residue His-127. Glu-129 (proton donor) is an active-site residue. A (2E)-4-hydroxy-3-methylbut-2-enyl diphosphate-binding site is contributed by Thr-165. Cys-193 contributes to the [4Fe-4S] cluster binding site. (2E)-4-hydroxy-3-methylbut-2-enyl diphosphate is bound by residues Ser-221, Ser-222, Asn-223, and Ser-265. Ser-221, Ser-222, Asn-223, and Ser-265 together coordinate dimethylallyl diphosphate. Isopentenyl diphosphate-binding residues include Ser-221, Ser-222, Asn-223, and Ser-265.

Belongs to the IspH family. Requires [4Fe-4S] cluster as cofactor.

It carries out the reaction isopentenyl diphosphate + 2 oxidized [2Fe-2S]-[ferredoxin] + H2O = (2E)-4-hydroxy-3-methylbut-2-enyl diphosphate + 2 reduced [2Fe-2S]-[ferredoxin] + 2 H(+). The catalysed reaction is dimethylallyl diphosphate + 2 oxidized [2Fe-2S]-[ferredoxin] + H2O = (2E)-4-hydroxy-3-methylbut-2-enyl diphosphate + 2 reduced [2Fe-2S]-[ferredoxin] + 2 H(+). Its pathway is isoprenoid biosynthesis; dimethylallyl diphosphate biosynthesis; dimethylallyl diphosphate from (2E)-4-hydroxy-3-methylbutenyl diphosphate: step 1/1. It functions in the pathway isoprenoid biosynthesis; isopentenyl diphosphate biosynthesis via DXP pathway; isopentenyl diphosphate from 1-deoxy-D-xylulose 5-phosphate: step 6/6. Functionally, catalyzes the conversion of 1-hydroxy-2-methyl-2-(E)-butenyl 4-diphosphate (HMBPP) into a mixture of isopentenyl diphosphate (IPP) and dimethylallyl diphosphate (DMAPP). Acts in the terminal step of the DOXP/MEP pathway for isoprenoid precursor biosynthesis. This Thermoanaerobacter pseudethanolicus (strain ATCC 33223 / 39E) (Clostridium thermohydrosulfuricum) protein is 4-hydroxy-3-methylbut-2-enyl diphosphate reductase.